Consider the following 611-residue polypeptide: Threonine--tRNA ligase (611 aa).

The tract at residues 211–509 (DHRKLGTELE…LTEHYAGEFP (299 aa)) is catalytic. C310, H361, and H486 together coordinate Zn(2+).

This sequence belongs to the class-II aminoacyl-tRNA synthetase family. Homodimer. The cofactor is Zn(2+).

The protein localises to the cytoplasm. The enzyme catalyses tRNA(Thr) + L-threonine + ATP = L-threonyl-tRNA(Thr) + AMP + diphosphate + H(+). Catalyzes the attachment of threonine to tRNA(Thr) in a two-step reaction: L-threonine is first activated by ATP to form Thr-AMP and then transferred to the acceptor end of tRNA(Thr). Also edits incorrectly charged L-seryl-tRNA(Thr). In Nautilia profundicola (strain ATCC BAA-1463 / DSM 18972 / AmH), this protein is Threonine--tRNA ligase.